Reading from the N-terminus, the 1464-residue chain is DNA-directed RNA polymerase subunit beta' (1464 aa).

Zn(2+) contacts are provided by Cys-66, Cys-68, Cys-96, and Cys-99. Positions 491, 493, and 495 each coordinate Mg(2+). 4 residues coordinate Zn(2+): Cys-838, Cys-912, Cys-919, and Cys-922. A compositionally biased stretch (acidic residues) spans 1143–1200 (NDDDDDDYYDSDYYDYYDYSDDDDDYDDYDDYYYNYDDDENDNDNDYDYDYDYDYDYD). Residues 1143-1229 (NDDDDDDYYD…YDYDYDSDSD (87 aa)) are disordered. Low complexity predominate over residues 1204–1219 (HNSYSHNSYSPSSNDN). Positions 1220–1229 (YDYDYDSDSD) are enriched in acidic residues.

The protein belongs to the RNA polymerase beta' chain family. The RNAP catalytic core consists of 2 alpha, 1 beta, 1 beta' and 1 omega subunit. When a sigma factor is associated with the core the holoenzyme is formed, which can initiate transcription. Mg(2+) is required as a cofactor. It depends on Zn(2+) as a cofactor.

It carries out the reaction RNA(n) + a ribonucleoside 5'-triphosphate = RNA(n+1) + diphosphate. Its function is as follows. DNA-dependent RNA polymerase catalyzes the transcription of DNA into RNA using the four ribonucleoside triphosphates as substrates. The chain is DNA-directed RNA polymerase subunit beta' from Karelsulcia muelleri (strain GWSS) (Sulcia muelleri).